The chain runs to 261 residues: MSDILDRIIAVKREEVRAAEQSAPLEELRLEASSRDLRDFVGALRAKHAAGLAAVIAEVKKASPSKGVLREHFVPAEIARSYEKHGAACLSVLTDVQFFKGSVAYLEQARAACNLPVLRKDFIVDPYQIVEARAMGADAILLIAAALETSQMQDLEALAHSLGLAVLVEVHDRDELMEALTLKTPLIGINNRNLRTFETSIETTIGMLEAIPDDRIVVTESGILSRVDVERLRAMDVHTFLVGEAFMRADEPGVELARMFF.

This sequence belongs to the TrpC family.

It carries out the reaction 1-(2-carboxyphenylamino)-1-deoxy-D-ribulose 5-phosphate + H(+) = (1S,2R)-1-C-(indol-3-yl)glycerol 3-phosphate + CO2 + H2O. Its pathway is amino-acid biosynthesis; L-tryptophan biosynthesis; L-tryptophan from chorismate: step 4/5. This chain is Indole-3-glycerol phosphate synthase, found in Paraburkholderia xenovorans (strain LB400).